Reading from the N-terminus, the 103-residue chain is uncharacterized protein (103 aa).

The chain crosses the membrane as a helical span at residues 33-57 (GYVAAIVAGPVSMSPLDWICPLLAI).

It localises to the membrane. This is an uncharacterized protein from Sinorhizobium fredii (strain NBRC 101917 / NGR234).